A 396-amino-acid polypeptide reads, in one-letter code: S-adenosylmethionine synthase (396 aa).

Glu-11 is a binding site for Mg(2+). His-17 lines the ATP pocket. Position 45 (Glu-45) interacts with K(+). 2 residues coordinate L-methionine: Glu-58 and Gln-101. ATP-binding positions include 169 to 171 (DGK), 237 to 240 (SGRF), Asp-248, 254 to 255 (RK), Ala-271, Lys-275, and Lys-279. Asp-248 is an L-methionine binding site. Residue Lys-279 participates in L-methionine binding.

It belongs to the AdoMet synthase family. As to quaternary structure, homotetramer. It depends on Mn(2+) as a cofactor. Requires Mg(2+) as cofactor. Co(2+) serves as cofactor. K(+) is required as a cofactor.

It is found in the cytoplasm. It catalyses the reaction L-methionine + ATP + H2O = S-adenosyl-L-methionine + phosphate + diphosphate. It participates in amino-acid biosynthesis; S-adenosyl-L-methionine biosynthesis; S-adenosyl-L-methionine from L-methionine: step 1/1. Functionally, catalyzes the formation of S-adenosylmethionine from methionine and ATP. The reaction comprises two steps that are both catalyzed by the same enzyme: formation of S-adenosylmethionine (AdoMet) and triphosphate, and subsequent hydrolysis of the triphosphate. This is S-adenosylmethionine synthase (SAMS) from Medicago sativa subsp. falcata (Sickle medic).